The following is a 129-amino-acid chain: Large ribosomal subunit protein bL12 (129 aa).

It belongs to the bacterial ribosomal protein bL12 family. As to quaternary structure, homodimer. Part of the ribosomal stalk of the 50S ribosomal subunit. Forms a multimeric L10(L12)X complex, where L10 forms an elongated spine to which 2 to 4 L12 dimers bind in a sequential fashion. Binds GTP-bound translation factors.

Forms part of the ribosomal stalk which helps the ribosome interact with GTP-bound translation factors. Is thus essential for accurate translation. This Protochlamydia amoebophila (strain UWE25) protein is Large ribosomal subunit protein bL12.